We begin with the raw amino-acid sequence, 220 residues long: Ribosomal RNA small subunit methyltransferase G (220 aa).

Residues G82, L87, 137 to 138, and R152 contribute to the S-adenosyl-L-methionine site; that span reads VE.

This sequence belongs to the methyltransferase superfamily. RNA methyltransferase RsmG family.

It is found in the cytoplasm. It carries out the reaction guanosine(527) in 16S rRNA + S-adenosyl-L-methionine = N(7)-methylguanosine(527) in 16S rRNA + S-adenosyl-L-homocysteine. Its function is as follows. Specifically methylates the N7 position of guanine in position 527 of 16S rRNA. The polypeptide is Ribosomal RNA small subunit methyltransferase G (Janthinobacterium sp. (strain Marseille) (Minibacterium massiliensis)).